Here is a 465-residue protein sequence, read N- to C-terminus: Siroheme synthase (465 aa).

A precorrin-2 dehydrogenase /sirohydrochlorin ferrochelatase region spans residues 1-203 (MDFLPLFHSL…GRPAEAERLL (203 aa)). NAD(+) contacts are provided by residues 22 to 23 (EV) and 43 to 44 (PQ). Ser128 is subject to Phosphoserine. The uroporphyrinogen-III C-methyltransferase stretch occupies residues 217 to 465 (GEVYLVGAGP…AWFEGAREDA (249 aa)). Pro226 is a binding site for S-adenosyl-L-methionine. Asp249 functions as the Proton acceptor in the catalytic mechanism. The Proton donor role is filled by Lys271. S-adenosyl-L-methionine contacts are provided by residues 302–304 (GGD), Ile307, 332–333 (TA), Met384, and Gly413.

In the N-terminal section; belongs to the precorrin-2 dehydrogenase / sirohydrochlorin ferrochelatase family. The protein in the C-terminal section; belongs to the precorrin methyltransferase family.

The catalysed reaction is uroporphyrinogen III + 2 S-adenosyl-L-methionine = precorrin-2 + 2 S-adenosyl-L-homocysteine + H(+). It catalyses the reaction precorrin-2 + NAD(+) = sirohydrochlorin + NADH + 2 H(+). The enzyme catalyses siroheme + 2 H(+) = sirohydrochlorin + Fe(2+). The protein operates within cofactor biosynthesis; adenosylcobalamin biosynthesis; precorrin-2 from uroporphyrinogen III: step 1/1. Its pathway is cofactor biosynthesis; adenosylcobalamin biosynthesis; sirohydrochlorin from precorrin-2: step 1/1. It functions in the pathway porphyrin-containing compound metabolism; siroheme biosynthesis; precorrin-2 from uroporphyrinogen III: step 1/1. It participates in porphyrin-containing compound metabolism; siroheme biosynthesis; siroheme from sirohydrochlorin: step 1/1. The protein operates within porphyrin-containing compound metabolism; siroheme biosynthesis; sirohydrochlorin from precorrin-2: step 1/1. Multifunctional enzyme that catalyzes the SAM-dependent methylations of uroporphyrinogen III at position C-2 and C-7 to form precorrin-2 via precorrin-1. Then it catalyzes the NAD-dependent ring dehydrogenation of precorrin-2 to yield sirohydrochlorin. Finally, it catalyzes the ferrochelation of sirohydrochlorin to yield siroheme. The protein is Siroheme synthase of Pseudomonas aeruginosa (strain UCBPP-PA14).